Here is a 72-residue protein sequence, read N- to C-terminus: MSKDDVIQMQGEVVENLPNATFRVKLENGHVVLGHISGKMRMHYIRILPGDKVTVELTPYDLSRARIVFRAK.

The 72-residue stretch at 1–72 folds into the S1-like domain; it reads MSKDDVIQMQ…SRARIVFRAK (72 aa).

The protein belongs to the IF-1 family. As to quaternary structure, component of the 30S ribosomal translation pre-initiation complex which assembles on the 30S ribosome in the order IF-2 and IF-3, IF-1 and N-formylmethionyl-tRNA(fMet); mRNA recruitment can occur at any time during PIC assembly.

It localises to the cytoplasm. In terms of biological role, one of the essential components for the initiation of protein synthesis. Stabilizes the binding of IF-2 and IF-3 on the 30S subunit to which N-formylmethionyl-tRNA(fMet) subsequently binds. Helps modulate mRNA selection, yielding the 30S pre-initiation complex (PIC). Upon addition of the 50S ribosomal subunit IF-1, IF-2 and IF-3 are released leaving the mature 70S translation initiation complex. This chain is Translation initiation factor IF-1, found in Albidiferax ferrireducens (strain ATCC BAA-621 / DSM 15236 / T118) (Rhodoferax ferrireducens).